The chain runs to 511 residues: Cytochrome P450 monooxygenase cypX (511 aa).

The helical transmembrane segment at 18 to 38 (LPFSLALVAAAFVLYNIVSII) threads the bilayer. N-linked (GlcNAc...) asparagine glycans are attached at residues Asn-162 and Asn-407. Position 454 (Cys-454) interacts with heme.

The protein belongs to the cytochrome P450 family. Requires heme as cofactor.

The protein localises to the membrane. Its pathway is mycotoxin biosynthesis. Functionally, cytochrome P450 monooxygenase; part of the fragmented gene cluster that mediates the biosynthesis of dothistromin (DOTH), a polyketide toxin very similar in structure to the aflatoxin precursor, versicolorin B. The first step of the pathway is the conversion of acetate to norsolorinic acid (NOR) and requires the fatty acid synthase subunits hexA and hexB, as well as the polyketide synthase pksA. PksA combines a hexanoyl starter unit and 7 malonyl-CoA extender units to synthesize the precursor NOR. The hexanoyl starter unit is provided to the acyl-carrier protein (ACP) domain by the fungal fatty acid synthase hexA/hexB. The second step is the conversion of NOR to averantin (AVN) and requires the norsolorinic acid ketoreductase nor1, which catalyzes the dehydration of norsolorinic acid to form (1'S)-averantin. The cytochrome P450 monooxygenase avnA then catalyzes the hydroxylation of AVN to 5'hydroxyaverantin (HAVN). The next step is performed by adhA that transforms HAVN to averufin (AVF). Averufin might then be converted to hydroxyversicolorone by cypX and avfA. Hydroxyversicolorone is further converted versiconal hemiacetal acetate (VHA) by moxY. VHA is then the substrate for the versiconal hemiacetal acetate esterase est1 to yield versiconal (VAL). Versicolorin B synthase vbsA then converts VAL to versicolorin B (VERB) by closing the bisfuran ring. Then, the activity of the versicolorin B desaturase verB leads to versicolorin A (VERA). DotB, a predicted chloroperoxidase, may perform epoxidation of the A-ring of VERA. Alternatively, a cytochrome P450, such as cypX or avnA could catalyze this step. It is also possible that another, uncharacterized, cytochrome P450 enzyme is responsible for this step. Opening of the epoxide could potentially be achieved by the epoxide hydrolase epoA. However, epoA seems not to be required for DOTH biosynthesis, but other epoxide hydrolases may have the ability to complement this hydrolysis. Alternatively, opening of the epoxide ring could be achieved non-enzymatically. The next step is the deoxygenation of ring A to yield the 5,8-dihydroxyanthraquinone which is most likely catalyzed by the NADPH dehydrogenase encoded by ver1. The last stages of DOTH biosynthesis are proposed to involve hydroxylation of the bisfuran. OrdB and norB might have oxidative roles here. An alternative possibility is that cytochrome P450 monoogenases such as avnA and cypX might perform these steps in addition to previously proposed steps. The protein is Cytochrome P450 monooxygenase cypX of Dothistroma septosporum (Red band needle blight fungus).